Consider the following 263-residue polypeptide: Hydroxyethylthiazole kinase (263 aa).

Met-41 serves as a coordination point for substrate. Positions 117 and 163 each coordinate ATP. Gly-190 is a binding site for substrate.

The protein belongs to the Thz kinase family. Mg(2+) is required as a cofactor.

It catalyses the reaction 5-(2-hydroxyethyl)-4-methylthiazole + ATP = 4-methyl-5-(2-phosphooxyethyl)-thiazole + ADP + H(+). The protein operates within cofactor biosynthesis; thiamine diphosphate biosynthesis; 4-methyl-5-(2-phosphoethyl)-thiazole from 5-(2-hydroxyethyl)-4-methylthiazole: step 1/1. Catalyzes the phosphorylation of the hydroxyl group of 4-methyl-5-beta-hydroxyethylthiazole (THZ). This chain is Hydroxyethylthiazole kinase, found in Thermoanaerobacter sp. (strain X514).